The sequence spans 109 residues: Nucleoid-associated protein swp_1717 (109 aa).

The tract at residues 88–109 (QKDKMAEVTGGMQLPPGMKMPF) is disordered.

This sequence belongs to the YbaB/EbfC family. As to quaternary structure, homodimer.

Its subcellular location is the cytoplasm. It localises to the nucleoid. Functionally, binds to DNA and alters its conformation. May be involved in regulation of gene expression, nucleoid organization and DNA protection. The chain is Nucleoid-associated protein swp_1717 from Shewanella piezotolerans (strain WP3 / JCM 13877).